A 245-amino-acid polypeptide reads, in one-letter code: Flavin mononucleotide hydrolase 1, chloroplatic (245 aa).

Residues 1–26 (MAAAAMHTSAEFINLKPNMWKKNPVR) constitute a chloroplast transit peptide.

It belongs to the HAD-like hydrolase superfamily. DOG/GPP family. Homodimer. Requires Mg(2+) as cofactor.

It localises to the plastid. It is found in the chloroplast stroma. The catalysed reaction is FMN + H2O = riboflavin + phosphate. It carries out the reaction 5-amino-6-(5-phospho-D-ribitylamino)uracil + H2O = 5-amino-6-(D-ribitylamino)uracil + phosphate. In terms of biological role, FMN hydrolase that catalyzes the dephosphorylation of flavin mononucleotide (FMN) to riboflavin. Can also dephosphorylate 5-amino-6-(5-phospho-D-ribitylamino)uracil, also known as ARPP. Not required for riboflavin biosynthesis in planta, but may help maintaining flavin homeostasis within chloroplasts. In Arabidopsis thaliana (Mouse-ear cress), this protein is Flavin mononucleotide hydrolase 1, chloroplatic.